The sequence spans 250 residues: AA9 family lytic polysaccharide monooxygenase AA17 (250 aa).

An N-terminal signal peptide occupies residues 1 to 21; it reads MAMSKIVSLTGLLASASLVAG. The Cu(2+) site is built by His22 and His107. 2 cysteine pairs are disulfide-bonded: Cys77-Cys199 and Cys118-Cys122. N-linked (GlcNAc...) asparagine glycosylation occurs at Asn159. Positions 185 and 194 each coordinate O2. Tyr196 serves as a coordination point for Cu(2+).

The protein belongs to the polysaccharide monooxygenase AA9 family. Requires Cu(2+) as cofactor.

The protein resides in the secreted. In terms of biological role, lytic polysaccharide monooxygenase (LPMO) that exhibits oxidative cleavage beta-O-4 linkage of lignin resulting in the formation of aromatic compound guaiacol. Catalysis by LPMOs requires the reduction of the active-site copper from Cu(II) to Cu(I) by a reducing agent and H(2)O(2) or O(2) as a cosubstrate. Does not use cellulose, cello-oligosaccharides, xyloglucan, xylan, chitin nor starch as substrates. Able to depolymerize the lignin dimer guaicyl glycerol beta-guaicyl ether (GGE). The chain is AA9 family lytic polysaccharide monooxygenase AA17 from Aspergillus oryzae (strain ATCC 42149 / RIB 40) (Yellow koji mold).